Reading from the N-terminus, the 102-residue chain is Small ribosomal subunit protein uS10 (102 aa).

Belongs to the universal ribosomal protein uS10 family. As to quaternary structure, part of the 30S ribosomal subunit.

In terms of biological role, involved in the binding of tRNA to the ribosomes. This Xanthobacter autotrophicus (strain ATCC BAA-1158 / Py2) protein is Small ribosomal subunit protein uS10.